The sequence spans 253 residues: TCF3 fusion partner (253 aa).

2 disordered regions span residues 49-72 (SGGLGGSGLRERDEEEEAARGRRR) and 142-211 (DEGS…PELA). Ser167 carries the post-translational modification Phosphoserine. Over residues 170-181 (RRTPAPPEPGSP) the composition is skewed to pro residues. At Thr172 the chain carries Phosphothreonine. A phosphoserine mark is found at Ser180 and Ser188. Phosphothreonine is present on Thr207. Residue Lys216 forms a Glycyl lysine isopeptide (Lys-Gly) (interchain with G-Cter in SUMO2) linkage. The disordered stretch occupies residues 234–253 (VSRGPDKLLPYPTLASPASD). Phosphoserine occurs at positions 249 and 252.

Interacts with NOL3; translocates NOL3 into the nucleus and negatively regulated TFPT-induced cell death. Component of the chromatin remodeling INO80 complex; specifically part of a complex module associated with the N-terminus of INO80.

It is found in the nucleus. Functionally, appears to promote apoptosis in a p53/TP53-independent manner. Putative regulatory component of the chromatin remodeling INO80 complex which is involved in transcriptional regulation, DNA replication and probably DNA repair. This chain is TCF3 fusion partner (TFPT), found in Homo sapiens (Human).